The sequence spans 299 residues: tRNA dimethylallyltransferase (299 aa).

ATP is bound at residue 10 to 17; sequence GPTASGKS. 12–17 provides a ligand contact to substrate; that stretch reads TASGKS.

It belongs to the IPP transferase family. As to quaternary structure, monomer. The cofactor is Mg(2+).

It catalyses the reaction adenosine(37) in tRNA + dimethylallyl diphosphate = N(6)-dimethylallyladenosine(37) in tRNA + diphosphate. Its function is as follows. Catalyzes the transfer of a dimethylallyl group onto the adenine at position 37 in tRNAs that read codons beginning with uridine, leading to the formation of N6-(dimethylallyl)adenosine (i(6)A). This is tRNA dimethylallyltransferase from Malacoplasma penetrans (strain HF-2) (Mycoplasma penetrans).